The sequence spans 271 residues: NADPH-dependent 7-cyano-7-deazaguanine reductase (271 aa).

Position 81-83 (81-83 (IES)) interacts with substrate. An NADPH-binding site is contributed by 83-84 (SK). The active-site Thioimide intermediate is Cys177. Asp184 serves as the catalytic Proton donor. Residue 216–217 (HE) coordinates substrate. NADPH is bound at residue 245–246 (RG).

It belongs to the GTP cyclohydrolase I family. QueF type 2 subfamily. In terms of assembly, homodimer.

The protein localises to the cytoplasm. It carries out the reaction 7-aminomethyl-7-carbaguanine + 2 NADP(+) = 7-cyano-7-deazaguanine + 2 NADPH + 3 H(+). The protein operates within tRNA modification; tRNA-queuosine biosynthesis. Functionally, catalyzes the NADPH-dependent reduction of 7-cyano-7-deazaguanine (preQ0) to 7-aminomethyl-7-deazaguanine (preQ1). This chain is NADPH-dependent 7-cyano-7-deazaguanine reductase, found in Xanthomonas oryzae pv. oryzae (strain MAFF 311018).